A 421-amino-acid chain; its full sequence is Fasciclin-like arabinogalactan protein ARB_02922 (421 aa).

Residues 1-17 form the signal peptide; it reads MLLYYILVALWATVTYA. 2 FAS1 domains span residues 18–167 and 169–296; these read KSFS…DRPL and LPQS…SDVL. Residues Asn-52, Asn-75, Asn-80, Asn-120, Asn-145, Asn-181, Asn-223, and Asn-300 are each glycosylated (N-linked (GlcNAc...) asparagine). A disordered region spans residues 300–401; sequence NDTAKPVPNA…NTPQPGAAAT (102 aa). Gly residues-rich tracts occupy residues 344–356 and 372–387; these read TSGG…GGGE and SGGG…GGPG. The segment covering 388-401 has biased composition (low complexity); sequence PTATNTPQPGAAAT. Gly-397 carries GPI-anchor amidated glycine lipidation. Residues 398-421 constitute a propeptide, removed in mature form; it reads AAATERAKAGLAAVVGLGVVLINA.

The protein belongs to the fasciclin-like AGP family.

The protein resides in the cell membrane. Functionally, may be a cell surface adhesion protein. The sequence is that of Fasciclin-like arabinogalactan protein ARB_02922 from Arthroderma benhamiae (strain ATCC MYA-4681 / CBS 112371) (Trichophyton mentagrophytes).